The chain runs to 303 residues: Scaffolding protein (303 aa).

The tract at residues 1-74 is post-transcriptional autoregulatory domain; it reads MEPTTEIQAT…RRRIERKRQR (74 aa). The tract at residues 275-303 is interaction with the capsid protein; the sequence is AIRKQMDAAASKGDVETYRKLKAKLKGIR.

As to quaternary structure, homodimer. Homotetramer. Interacts with the portal protein; this interaction initiates procapsid assembly, thereby ensuring incorporation of only one portal ring per capsid. Interacts (via C-terminus) with the capsid protein; this interaction allow to form the procapsid, in which the scaffolding protein forms an internal shell in the icosahedrally arranged capsid protein subunits.

Required for procapsid assembly. The interior of the prohead is filled with the scaffolding protein. The scaffolding protein is lost from the structure during packaging. Scaffolding protein exit is followed by the expansion of the procapsid into a mature capsid. The sequence is that of Scaffolding protein (8) from Salmonella typhimurium (Bacteriophage P22).